The following is a 100-amino-acid chain: uncharacterized protein (100 aa).

This is an uncharacterized protein from Acidianus convivator (ATV).